Here is a 211-residue protein sequence, read N- to C-terminus: Transcriptional regulatory protein RcsA (211 aa).

The region spanning 135-200 (LDVHPLTLSQ…VIYHVVRLTD (66 aa)) is the HTH luxR-type domain. A DNA-binding region (H-T-H motif) is located at residues 159-178 (TIQISDKMQIKAKTVSSHKG).

This sequence belongs to the RcsA family.

Functionally, component of the Rcs signaling system, which controls transcription of numerous genes. Binds to DNA to regulate expression of genes. The chain is Transcriptional regulatory protein RcsA from Pantoea stewartii subsp. stewartii (Erwinia stewartii).